A 185-amino-acid chain; its full sequence is Cbp/p300-interacting transactivator 4 (185 aa).

2 disordered regions span residues 15-64 and 95-130; these read PRPP…VAYG and YPGR…AHAL. Residues 103-125 show a composition bias toward pro residues; it reads PGAPGGPSGPQPAPGAPAPPLQP.

This sequence belongs to the CITED family. As to quaternary structure, interacts via its C-terminal region with the CH1 domain of CREBBP and EP300. Interacts with all TFAP2/AP-2 isoforms.

Its subcellular location is the nucleus. The protein localises to the cytoplasm. In terms of biological role, acts as a transcriptional coactivator for TFAP2/AP-2. Enhances estrogen-dependent transactivation mediated by estrogen receptors. May function as an inhibitor of transactivation by HIF1A by disrupting HIF1A interaction with CREBBP. May be involved in regulation of gene expression during development and differentiation of blood cells, endothelial cells and mammary epithelial cells. The protein is Cbp/p300-interacting transactivator 4 (CITED4) of Bos taurus (Bovine).